A 351-amino-acid chain; its full sequence is Minor outer capsid protein P9 (351 aa).

Disordered regions lie at residues G245–E281 and K288–S307. Basic and acidic residues predominate over residues K288–P297.

It belongs to the phytoreovirus minor outer capsid protein P9 family.

The protein resides in the virion. The protein localises to the host cytoplasm. In terms of biological role, minor outer capsid protein. This is Minor outer capsid protein P9 from Rice dwarf virus (RDV).